The sequence spans 550 residues: Methionine--tRNA ligase (550 aa).

Residues 13–23 (PYANGPLHFGH) carry the 'HIGH' region motif. Zn(2+) is bound by residues Cys145, Cys148, Cys158, and Cys161. The short motif at 331-335 (QFSKS) is the 'KMSKS' region element. Lys334 serves as a coordination point for ATP.

The protein belongs to the class-I aminoacyl-tRNA synthetase family. MetG type 1 subfamily. Monomer. Zn(2+) is required as a cofactor.

It localises to the cytoplasm. The enzyme catalyses tRNA(Met) + L-methionine + ATP = L-methionyl-tRNA(Met) + AMP + diphosphate. In terms of biological role, is required not only for elongation of protein synthesis but also for the initiation of all mRNA translation through initiator tRNA(fMet) aminoacylation. This Chlamydia trachomatis serovar D (strain ATCC VR-885 / DSM 19411 / UW-3/Cx) protein is Methionine--tRNA ligase (metG).